A 134-amino-acid polypeptide reads, in one-letter code: Ribonuclease P protein component (134 aa).

This sequence belongs to the RnpA family. In terms of assembly, consists of a catalytic RNA component (M1 or rnpB) and a protein subunit.

It catalyses the reaction Endonucleolytic cleavage of RNA, removing 5'-extranucleotides from tRNA precursor.. RNaseP catalyzes the removal of the 5'-leader sequence from pre-tRNA to produce the mature 5'-terminus. It can also cleave other RNA substrates such as 4.5S RNA. The protein component plays an auxiliary but essential role in vivo by binding to the 5'-leader sequence and broadening the substrate specificity of the ribozyme. The chain is Ribonuclease P protein component from Ectopseudomonas mendocina (strain ymp) (Pseudomonas mendocina).